A 623-amino-acid polypeptide reads, in one-letter code: Glutathione import ATP-binding protein GsiA (623 aa).

ABC transporter domains are found at residues Val15–Leu269 and Leu314–Leu564. Residues Gly49–Ser56 and Gly357–Ser364 contribute to the ATP site.

The protein belongs to the ABC transporter superfamily. Glutathione importer (TC 3.A.1.5.11) family. The complex is composed of two ATP-binding proteins (GsiA), two transmembrane proteins (GsiC and GsiD) and a solute-binding protein (GsiB).

It is found in the cell inner membrane. It carries out the reaction glutathione(out) + ATP + H2O = glutathione(in) + ADP + phosphate + H(+). Functionally, part of the ABC transporter complex GsiABCD involved in glutathione import. Responsible for energy coupling to the transport system. The protein is Glutathione import ATP-binding protein GsiA of Shigella dysenteriae serotype 1 (strain Sd197).